A 141-amino-acid polypeptide reads, in one-letter code: MYKHILVAVDLSEESPILLKKAVGIAKRHDAKLSIIHVDVNFSDLYTGLIDVNMSSMQDRISTETQKALLDLAESVDYPISEKLSGSGDLGQVLSDAIEQYDVDLLVTGHHQDFWSKLMSSTRQVMNTIKIDMLVVPLRDE.

The protein belongs to the universal stress protein A family. In terms of assembly, homodimer.

The protein resides in the cytoplasm. In terms of biological role, required for resistance to DNA-damaging agents. This is Universal stress protein A homolog (uspA) from Haemophilus influenzae (strain ATCC 51907 / DSM 11121 / KW20 / Rd).